Consider the following 61-residue polypeptide: UPF0391 membrane protein Ajs_0703 (61 aa).

Transmembrane regions (helical) follow at residues 5 to 25 (AIIFAIISLIAGALGFTGVAA) and 33 to 53 (VLFVVFLVLAVLFVVLALLGI).

It belongs to the UPF0391 family.

It is found in the cell membrane. The protein is UPF0391 membrane protein Ajs_0703 of Acidovorax sp. (strain JS42).